The sequence spans 84 residues: Large ribosomal subunit protein bL31B (84 aa).

It belongs to the bacterial ribosomal protein bL31 family. Type B subfamily. Part of the 50S ribosomal subunit.

This is Large ribosomal subunit protein bL31B from Photorhabdus laumondii subsp. laumondii (strain DSM 15139 / CIP 105565 / TT01) (Photorhabdus luminescens subsp. laumondii).